Consider the following 511-residue polypeptide: Small ribosomal subunit protein uS4m (511 aa).

One can recognise an S4 RNA-binding domain in the interval 202–272 (KRLDVVLYRS…IKNNLFSNIN (71 aa)).

The protein belongs to the universal ribosomal protein uS4 family.

The protein localises to the mitochondrion. The polypeptide is Small ribosomal subunit protein uS4m (RPS4) (Prototheca wickerhamii).